The following is a 241-amino-acid chain: RxLR effector protein SFI5 (241 aa).

Residues 1 to 20 (MLRQARPLVVLIAVTFLVAS) form the signal peptide. The short motif at 44 to 62 (RLLRTHHATIKVNADSEER) is the RxLR-dEER element.

Belongs to the RxLR effector family.

It localises to the secreted. Its subcellular location is the host cell membrane. Its function is as follows. Effector that suppresses flg22-induced post-translational MAP kinase activation in tomato but not in Arabidopsis. The perception of highly conserved pathogen- or microbe-associated molecular patterns (PAMPs/MAMPs), such as flg22, triggers converging signaling pathways recruiting MAP kinase cascades and inducing transcriptional re-programming, yielding a generic antimicrobial response. The protein is RxLR effector protein SFI5 of Phytophthora infestans (strain T30-4) (Potato late blight agent).